Here is a 149-residue protein sequence, read N- to C-terminus: 3-hydroxyacyl-[acyl-carrier-protein] dehydratase FabZ (149 aa).

The active site involves His48.

This sequence belongs to the thioester dehydratase family. FabZ subfamily.

The protein resides in the cytoplasm. The enzyme catalyses a (3R)-hydroxyacyl-[ACP] = a (2E)-enoyl-[ACP] + H2O. Functionally, involved in unsaturated fatty acids biosynthesis. Catalyzes the dehydration of short chain beta-hydroxyacyl-ACPs and long chain saturated and unsaturated beta-hydroxyacyl-ACPs. This Thermomicrobium roseum (strain ATCC 27502 / DSM 5159 / P-2) protein is 3-hydroxyacyl-[acyl-carrier-protein] dehydratase FabZ.